The chain runs to 210 residues: Somatotropin-2 (210 aa).

The first 22 residues, 1–22, serve as a signal peptide directing secretion; that stretch reads MGQVFLLMPVLLVSCFLGQGAA. His38 is a binding site for Zn(2+). A disulfide bridge links Cys71 with Cys183. Glu192 contacts Zn(2+). Cys200 and Cys208 are joined by a disulfide.

Belongs to the somatotropin/prolactin family.

It is found in the secreted. Its function is as follows. Growth hormone plays an important role in growth control and is involved in the regulation of several anabolic processes. Implicated as an osmoregulatory substance important for seawater adaptation. The polypeptide is Somatotropin-2 (gh2) (Oncorhynchus mykiss (Rainbow trout)).